Consider the following 599-residue polypeptide: Cartilage intermediate layer protein 1 (599 aa).

Asparagine 47, asparagine 416, and asparagine 472 each carry an N-linked (GlcNAc...) asparagine glycan. Residues 550 to 560 show a composition bias toward polar residues; sequence QSTSARPSPAS. The segment at 550-599 is disordered; it reads QSTSARPSPASTVRGRAPSRRQRASSGSQRQPRGVASLRFPGVAQQPLSN. A compositionally biased stretch (low complexity) spans 573-583; that stretch reads ASSGSQRQPRG.

In terms of assembly, monomer. Interacts with TGFB1. Cleaved into 2 chains possibly by a furin-like protease upon or preceding secretion. As to expression, specifically expressed in cartilage. Expressed at lower level in young cartilage than in adult cartilage. In adult cartilage, it is highly expressed throughout middeep zones.

It localises to the secreted. The protein localises to the extracellular space. It is found in the extracellular matrix. Its function is as follows. Probably plays a role in cartilage scaffolding. May act by antagonizing TGF-beta1 (TGFB1) and IGF1 functions. Has the ability to suppress IGF1-induced proliferation and sulfated proteoglycan synthesis, and inhibits ligand-induced IGF1R autophosphorylation. May inhibit TGFB1-mediated induction of cartilage matrix genes via its interaction with TGFB1. Overexpression may lead to impair chondrocyte growth and matrix repair and indirectly promote inorganic pyrophosphate (PPi) supersaturation in aging and osteoarthritis cartilage. This chain is Cartilage intermediate layer protein 1 (CILP), found in Sus scrofa (Pig).